The primary structure comprises 239 residues: tRNA (guanine-N(7)-)-methyltransferase (239 aa).

4 residues coordinate S-adenosyl-L-methionine: Glu-69, Glu-94, Asp-121, and Asp-144. Residue Asp-144 is part of the active site. Substrate-binding positions include Lys-148, Asp-180, and 217–220; that span reads TKFE.

It belongs to the class I-like SAM-binding methyltransferase superfamily. TrmB family.

The enzyme catalyses guanosine(46) in tRNA + S-adenosyl-L-methionine = N(7)-methylguanosine(46) in tRNA + S-adenosyl-L-homocysteine. It functions in the pathway tRNA modification; N(7)-methylguanine-tRNA biosynthesis. In terms of biological role, catalyzes the formation of N(7)-methylguanine at position 46 (m7G46) in tRNA. The chain is tRNA (guanine-N(7)-)-methyltransferase from Pseudoalteromonas atlantica (strain T6c / ATCC BAA-1087).